The following is a 228-amino-acid chain: MTDETEEDDTTQQRSSRNDGVSKNKGKGFKGDKAKRALIGAGGRILFYPTLLYNLVRFKLQSQFRWWDQIDEYLLMGAVPFRKDVPRLKKLGVGGVITLNEPYETLVPSSLYSAYEMEHLVIPTRDYLFAPSIVDITLAVNFIHKNALLGKTTYVHCKAGRGRSTTVVLCYLIEHKSMTVAAAFEHVRSIRPRVLLHPSQRKVVEEFSRLQSPLSESTFIATSGDIVS.

A compositionally biased stretch (acidic residues) spans 1-10 (MTDETEEDDT). The segment at 1 to 30 (MTDETEEDDTTQQRSSRNDGVSKNKGKGFK) is disordered. Residues Tyr48 and Asp126 each coordinate substrate. The region spanning 66–213 (WWDQIDEYLL…VEEFSRLQSP (148 aa)) is the Tyrosine-protein phosphatase domain. Cys157 functions as the Phosphocysteine intermediate in the catalytic mechanism. Positions 157–163 (CKAGRGR) match the Glucan phosphatase signature motif CXAGXGR motif. Substrate is bound at residue 158–163 (KAGRGR).

Belongs to the protein-tyrosine phosphatase family. Non-receptor class dual specificity subfamily. As to expression, expressed in roots, leaves, stems and flowers. Expressed at low levels in stems and flowers.

The enzyme catalyses O-phospho-L-seryl-[protein] + H2O = L-seryl-[protein] + phosphate. It catalyses the reaction O-phospho-L-threonyl-[protein] + H2O = L-threonyl-[protein] + phosphate. The catalysed reaction is O-phospho-L-tyrosyl-[protein] + H2O = L-tyrosyl-[protein] + phosphate. It carries out the reaction a 1,2-diacyl-sn-glycero-3-phospho-(1'-sn-glycero-3'-phosphate) + H2O = a 1,2-diacyl-sn-glycero-3-phospho-(1'-sn-glycerol) + phosphate. The protein operates within phospholipid metabolism; phosphatidylglycerol biosynthesis; phosphatidylglycerol from CDP-diacylglycerol: step 2/2. Functionally, exhibits phosphatidylglycerophosphate phosphatase activity. Involved in root growth and columella cells organization. May possess protein phosphatase activity. In Arabidopsis thaliana (Mouse-ear cress), this protein is Phosphatidylglycerophosphate phosphatase PTPMT2.